We begin with the raw amino-acid sequence, 987 residues long: 110 kDa U5 small nuclear ribonucleoprotein component CLO (987 aa).

Positions 1 to 54 (MESSLYDEFGNYVGPEIESDRDSDDEVEDEDLQDKHLEENGSDGEQGPGGSNGW) are disordered. The segment covering 17–32 (IESDRDSDDEVEDEDL) has biased composition (acidic residues). The region spanning 136-422 (ALVRNVALVG…LGVTLSNSAY (287 aa)) is the tr-type G domain. The tract at residues 145 to 152 (GHLQHGKT) is G1. Residue 145-152 (GHLQHGKT) coordinates GTP. The segment at 189-193 (NISIK) is G2. The tract at residues 215–218 (DTPG) is G3. GTP contacts are provided by residues 215-219 (DTPGH) and 269-272 (NKVD). The interval 269–272 (NKVD) is G4. The interval 395–397 (YSQ) is G5.

The protein belongs to the TRAFAC class translation factor GTPase superfamily. Classic translation factor GTPase family. Interacts with BRR2A and PRP8A. As to expression, expressed in flower buds, open flowers and siliques. Expressed at low levels in rosettes leaves, cauline leaves and stems.

It is found in the nucleus speckle. Its function is as follows. Splicing factor involved in pre-mRNA splicing and component of the spliceosome. Essential for reproduction. In female gametophyte, is necessary for the egg cell and central cell fate determination and hence reproductive success. Involved in a mechanism that prevents accessory cells from adopting gametic cell fate. Is necessary to restrict LIS expression to interfere with egg-cell specification. Probable component of U5 small nuclear ribonucleoprotein (snRNP) that is required for pre-mRNA splicing. Plays an essential role in female gametogenesis and embryo development. Required for the control of polarized cell growth and cell proliferation during floral organ morphogenesis. This Arabidopsis thaliana (Mouse-ear cress) protein is 110 kDa U5 small nuclear ribonucleoprotein component CLO.